Consider the following 436-residue polypeptide: Bifunctional IPC transferase and DIPP synthase (436 aa).

Residues 11-241 (GVGAAVLAAG…LSEEMVLGWA (231 aa)) are mobA-like NTP transferase. CTP is bound by residues 17–19 (LAA) and lysine 32. Positions 242–435 (ASGNDGPVSR…RRLLALKRGR (194 aa)) are CDP-alcohol phosphatidyltransferases. Transmembrane regions (helical) follow at residues 275–295 (VSLL…AGRL), 349–371 (AGTR…VSYT), and 397–417 (LAVL…LATG).

The protein in the N-terminal section; belongs to the MobA family. In the C-terminal section; belongs to the CDP-alcohol phosphatidyltransferase class-I family.

It localises to the membrane. It carries out the reaction 1D-myo-inositol 3-phosphate + CTP + H(+) = CDP-1L-myo-inositol + diphosphate. It catalyses the reaction CDP-1L-myo-inositol + 1D-myo-inositol 3-phosphate = bis(1L-myo-inositol) 3,1'-phosphate 1-phosphate + CMP + H(+). Involved in biosynthesis of di-myo-inositol phosphate (DIP), a widespread organic solute in microorganisms adapted to hot environments. Catalyzes the condensation of CTP and L-myo-inositol-1-phosphate into CDP-L-myo-inositol, as well as the biosynthesis of di-myo-inositol-1,3'-phosphate-1'-phosphate (DIPP) from CDP-L-myo-inositol and L-myo-inositol-1-phosphate. The protein is Bifunctional IPC transferase and DIPP synthase of Rubrobacter xylanophilus (strain DSM 9941 / JCM 11954 / NBRC 16129 / PRD-1).